A 367-amino-acid chain; its full sequence is NAD(P)H-quinone oxidoreductase subunit 1, chloroplastic (367 aa).

8 helical membrane-spanning segments follow: residues 29 to 49 (WIPL…LVVV), 96 to 116 (VLLF…SYLI), 128 to 148 (INLG…GLLM), 176 to 196 (LALC…IDIV), 204 to 224 (ILGW…IAAL), 266 to 286 (LVSA…PIPI), 304 to 324 (VISA…FLFL), and 347 to 367 (FLLP…IALL).

It belongs to the complex I subunit 1 family. As to quaternary structure, NDH is composed of at least 16 different subunits, 5 of which are encoded in the nucleus.

It localises to the plastid. It is found in the chloroplast thylakoid membrane. It carries out the reaction a plastoquinone + NADH + (n+1) H(+)(in) = a plastoquinol + NAD(+) + n H(+)(out). The enzyme catalyses a plastoquinone + NADPH + (n+1) H(+)(in) = a plastoquinol + NADP(+) + n H(+)(out). Its function is as follows. NDH shuttles electrons from NAD(P)H:plastoquinone, via FMN and iron-sulfur (Fe-S) centers, to quinones in the photosynthetic chain and possibly in a chloroplast respiratory chain. The immediate electron acceptor for the enzyme in this species is believed to be plastoquinone. Couples the redox reaction to proton translocation, and thus conserves the redox energy in a proton gradient. This is NAD(P)H-quinone oxidoreductase subunit 1, chloroplastic from Mesostigma viride (Green alga).